The sequence spans 273 residues: Shikimate dehydrogenase (NADP(+)) (273 aa).

Residues 18 to 20 (SKS) and T65 each bind shikimate. K69 functions as the Proton acceptor in the catalytic mechanism. E81 contributes to the NADP(+) binding site. N90 and D105 together coordinate shikimate. NADP(+)-binding positions include 130–134 (GAGGA), 154–159 (NRTHSK), and M217. Y219 lines the shikimate pocket. G240 provides a ligand contact to NADP(+).

This sequence belongs to the shikimate dehydrogenase family. As to quaternary structure, homodimer.

It catalyses the reaction shikimate + NADP(+) = 3-dehydroshikimate + NADPH + H(+). It functions in the pathway metabolic intermediate biosynthesis; chorismate biosynthesis; chorismate from D-erythrose 4-phosphate and phosphoenolpyruvate: step 4/7. Its function is as follows. Involved in the biosynthesis of the chorismate, which leads to the biosynthesis of aromatic amino acids. Catalyzes the reversible NADPH linked reduction of 3-dehydroshikimate (DHSA) to yield shikimate (SA). The protein is Shikimate dehydrogenase (NADP(+)) of Janthinobacterium sp. (strain Marseille) (Minibacterium massiliensis).